We begin with the raw amino-acid sequence, 81 residues long: Large ribosomal subunit protein bL27m (81 aa).

Residues 1-11 (MATKKSGGSSR) are compositionally biased toward polar residues. Residues 1 to 20 (MATKKSGGSSRNGRDSKGRR) form a disordered region.

Belongs to the bacterial ribosomal protein bL27 family.

It localises to the mitochondrion. The polypeptide is Large ribosomal subunit protein bL27m (RPL27) (Reclinomonas americana).